A 333-amino-acid chain; its full sequence is Foldase protein PrsA (333 aa).

A signal peptide spans 1-22 (MKKSTKLLAGIVTLASAMTLAA). Cys23 carries N-palmitoyl cysteine lipidation. Cys23 is lipidated: S-diacylglycerol cysteine. The region spanning 145–240 (TPEMTTQVIT…NKFYIVKVTK (96 aa)) is the PpiC domain. The segment at 301–333 (DKKASKANTSKSDQKTSSDSSKDSQSSKSKSEK) is disordered. Positions 312–322 (SDQKTSSDSSK) are enriched in basic and acidic residues. Residues 323 to 333 (DSQSSKSKSEK) show a composition bias toward low complexity.

The protein belongs to the PrsA family.

The protein resides in the cell membrane. The enzyme catalyses [protein]-peptidylproline (omega=180) = [protein]-peptidylproline (omega=0). Its function is as follows. Plays a major role in protein secretion by helping the post-translocational extracellular folding of several secreted proteins. In Streptococcus equi subsp. zooepidemicus (strain MGCS10565), this protein is Foldase protein PrsA.